Consider the following 961-residue polypeptide: Lon protease homolog, mitochondrial (961 aa).

A mitochondrion-targeting transit peptide spans 1–67 (MAGGTGCVRL…SPAAAGHWRG (67 aa)). 2 disordered regions span residues 76 to 103 (GGGA…GSAG) and 220 to 262 (QLEV…VVVG). Residues 125 to 371 (LPLIAVTRNP…KALSLLKKEF (247 aa)) enclose the Lon N-terminal domain. The segment covering 235–244 (KLRKKPKRGK) has biased composition (basic residues). Over residues 245–257 (KEAEEDGATKRPL) the composition is skewed to basic and acidic residues. Position 524 to 531 (524 to 531 (GPPGVGKT)) interacts with ATP. Residues 760–951 (VTPPGVVMGL…REIFDIAFPE (192 aa)) form the Lon proteolytic domain. Residues 784–801 (SLRRPRDRDSDKGDKDGS) are compositionally biased toward basic and acidic residues. The segment at 784–803 (SLRRPRDRDSDKGDKDGSLE) is disordered. Catalysis depends on residues Ser-857 and Lys-900.

Belongs to the peptidase S16 family. As to quaternary structure, homohexamer. Organized in a ring with a central cavity. The ATP-binding and proteolytic domains (AP-domain) form a hexameric chamber, while the N-terminal domain is arranged as a trimer of dimers. DNA and RNA binding is stimulated by substrate and inhibited by ATP binding. Interacts with TWNK and mitochondrial DNA polymerase subunit POLG.

The protein resides in the mitochondrion matrix. The enzyme catalyses Hydrolysis of proteins in presence of ATP.. ATP-dependent serine protease that mediates the selective degradation of misfolded, unassembled or oxidatively damaged polypeptides as well as certain short-lived regulatory proteins in the mitochondrial matrix. Endogenous substrates include mitochondrial steroidogenic acute regulatory (StAR) protein, DELE1, helicase Twinkle (TWNK) and the large ribosomal subunit protein MRPL32/bL32m. MRPL32/bL32m is protected from degradation by LONP1 when it is bound to a nucleic acid (RNA), but TWNK is not. May also have a chaperone function in the assembly of inner membrane protein complexes. Participates in the regulation of mitochondrial gene expression and in the maintenance of the integrity of the mitochondrial genome. Binds to mitochondrial promoters and RNA in a single-stranded, site-specific, and strand-specific manner. May regulate mitochondrial DNA replication and/or gene expression using site-specific, single-stranded DNA binding to target the degradation of regulatory proteins binding to adjacent sites in mitochondrial promoters. This Bos taurus (Bovine) protein is Lon protease homolog, mitochondrial.